Reading from the N-terminus, the 115-residue chain is U3-lycotoxin-Ls1a (115 aa).

The signal sequence occupies residues 1–20; the sequence is MKFVLLFGVFLVTLFSYSSA. Residues 21 to 44 constitute a propeptide that is removed on maturation; sequence EMLDDFGQADEDELLSLIEKEEAR. 4 disulfide bridges follow: C48–C63, C55–C72, C62–C87, and C74–C85.

It belongs to the neurotoxin 19 (CSTX) family. 01 subfamily. As to expression, expressed by the venom gland.

It localises to the secreted. In Lycosa singoriensis (Wolf spider), this protein is U3-lycotoxin-Ls1a.